The following is a 504-amino-acid chain: Cytochrome P450 6B6 (504 aa).

Position 445 (C445) interacts with heme.

It belongs to the cytochrome P450 family. It depends on heme as a cofactor.

The protein resides in the endoplasmic reticulum membrane. The protein localises to the microsome membrane. It carries out the reaction an organic molecule + reduced [NADPH--hemoprotein reductase] + O2 = an alcohol + oxidized [NADPH--hemoprotein reductase] + H2O + H(+). The polypeptide is Cytochrome P450 6B6 (CYP6B6) (Helicoverpa armigera (Cotton bollworm)).